Here is a 59-residue protein sequence, read N- to C-terminus: Large ribosomal subunit protein bL32 (59 aa).

This sequence belongs to the bacterial ribosomal protein bL32 family.

This chain is Large ribosomal subunit protein bL32, found in Rhizorhabdus wittichii (strain DSM 6014 / CCUG 31198 / JCM 15750 / NBRC 105917 / EY 4224 / RW1) (Sphingomonas wittichii).